The following is a 163-amino-acid chain: Deoxyuridine 5'-triphosphate nucleotidohydrolase (163 aa).

Belongs to the dUTPase family. Mg(2+) serves as cofactor.

It catalyses the reaction dUTP + H2O = dUMP + diphosphate + H(+). The protein operates within pyrimidine metabolism; dUMP biosynthesis; dUMP from dCTP (dUTP route): step 2/2. Its function is as follows. This enzyme is involved in nucleotide metabolism: it produces dUMP, the immediate precursor of thymidine nucleotides and it decreases the intracellular concentration of dUTP so that uracil cannot be incorporated into DNA. The sequence is that of Deoxyuridine 5'-triphosphate nucleotidohydrolase from Galliformes (FAdV-8).